The primary structure comprises 278 residues: Octanoyltransferase LipM (278 aa).

The BPL/LPL catalytic domain occupies 33–248 (KKMPPTIRFY…GFEKGLDVEL (216 aa)). Catalysis depends on cysteine 150, which acts as the Acyl-thioester intermediate.

This sequence belongs to the octanoyltransferase LipM family. Monomer.

The catalysed reaction is octanoyl-[ACP] + L-lysyl-[protein] = N(6)-octanoyl-L-lysyl-[protein] + holo-[ACP] + H(+). The protein operates within protein modification; protein lipoylation via endogenous pathway; protein N(6)-(lipoyl)lysine from octanoyl-[acyl-carrier-protein]. Functionally, catalyzes the transfer of endogenously produced octanoic acid from octanoyl-acyl-carrier-protein onto the lipoyl domain of GcvH, an intermediate carrier during protein lipoylation. In Bacillus anthracis, this protein is Octanoyltransferase LipM.